A 1456-amino-acid chain; its full sequence is Alpha-2-macroglobulin-like protein 1 (1456 aa).

A signal peptide spans 1 to 19; the sequence is MVPTILLSALLLHFTDVVA. 3 N-linked (GlcNAc...) asparagine glycosylation sites follow: Asn48, Asn172, and Asn868.

Belongs to the protease inhibitor I39 (alpha-2-macroglobulin) family. As to quaternary structure, homotetramer; consists of two dimer pairs that are disulfide-linked. Part of a complex composed of complement component C3, CLCA1/CLCA3, A2ML1/OH and ALB/serum albumin.

The protein localises to the secreted. Its function is as follows. Inhibits protease gelatinolytic complex activity against type 1 collagen. This chain is Alpha-2-macroglobulin-like protein 1, found in Mus musculus (Mouse).